A 255-amino-acid chain; its full sequence is Hydroxyacylglutathione hydrolase (255 aa).

His-56, His-58, Asp-60, His-61, His-114, Asp-133, and His-171 together coordinate Zn(2+).

Belongs to the metallo-beta-lactamase superfamily. Glyoxalase II family. In terms of assembly, monomer. Zn(2+) is required as a cofactor.

The catalysed reaction is an S-(2-hydroxyacyl)glutathione + H2O = a 2-hydroxy carboxylate + glutathione + H(+). Its pathway is secondary metabolite metabolism; methylglyoxal degradation; (R)-lactate from methylglyoxal: step 2/2. Thiolesterase that catalyzes the hydrolysis of S-D-lactoyl-glutathione to form glutathione and D-lactic acid. The polypeptide is Hydroxyacylglutathione hydrolase (Cereibacter sphaeroides (strain ATCC 17023 / DSM 158 / JCM 6121 / CCUG 31486 / LMG 2827 / NBRC 12203 / NCIMB 8253 / ATH 2.4.1.) (Rhodobacter sphaeroides)).